Reading from the N-terminus, the 591-residue chain is L-fucose isomerase (591 aa).

Residues Glu-337 and Asp-361 each act as proton acceptor in the active site. Residues Glu-337, Asp-361, and His-528 each coordinate Mn(2+).

This sequence belongs to the L-fucose isomerase family. Homohexamer. It depends on Mn(2+) as a cofactor.

Its subcellular location is the cytoplasm. It catalyses the reaction L-fucose = L-fuculose. Its pathway is carbohydrate degradation; L-fucose degradation; L-lactaldehyde and glycerone phosphate from L-fucose: step 1/3. Functionally, converts the aldose L-fucose into the corresponding ketose L-fuculose. This is L-fucose isomerase from Citrobacter koseri (strain ATCC BAA-895 / CDC 4225-83 / SGSC4696).